The primary structure comprises 338 residues: Anthranilate phosphoribosyltransferase (338 aa).

5-phospho-alpha-D-ribose 1-diphosphate-binding positions include Gly80, 83–84 (GD), Thr88, 90–93 (NIST), 108–116 (KHGNRSVSS), and Ser120. Residue Gly80 coordinates anthranilate. Ser92 serves as a coordination point for Mg(2+). Anthranilate is bound at residue Asn111. Residue Arg166 participates in anthranilate binding. Mg(2+) contacts are provided by Asp225 and Glu226.

It belongs to the anthranilate phosphoribosyltransferase family. Homodimer. Mg(2+) serves as cofactor.

It catalyses the reaction N-(5-phospho-beta-D-ribosyl)anthranilate + diphosphate = 5-phospho-alpha-D-ribose 1-diphosphate + anthranilate. Its pathway is amino-acid biosynthesis; L-tryptophan biosynthesis; L-tryptophan from chorismate: step 2/5. In terms of biological role, catalyzes the transfer of the phosphoribosyl group of 5-phosphorylribose-1-pyrophosphate (PRPP) to anthranilate to yield N-(5'-phosphoribosyl)-anthranilate (PRA). This Desulfatibacillum aliphaticivorans protein is Anthranilate phosphoribosyltransferase.